We begin with the raw amino-acid sequence, 932 residues long: Glycine dehydrogenase (decarboxylating) (932 aa).

The residue at position 685 (Lys-685) is an N6-(pyridoxal phosphate)lysine.

This sequence belongs to the GcvP family. In terms of assembly, the glycine cleavage system is composed of four proteins: P, T, L and H. Requires pyridoxal 5'-phosphate as cofactor.

The catalysed reaction is N(6)-[(R)-lipoyl]-L-lysyl-[glycine-cleavage complex H protein] + glycine + H(+) = N(6)-[(R)-S(8)-aminomethyldihydrolipoyl]-L-lysyl-[glycine-cleavage complex H protein] + CO2. Its function is as follows. The glycine cleavage system catalyzes the degradation of glycine. The P protein binds the alpha-amino group of glycine through its pyridoxal phosphate cofactor; CO(2) is released and the remaining methylamine moiety is then transferred to the lipoamide cofactor of the H protein. The polypeptide is Glycine dehydrogenase (decarboxylating) (Brucella melitensis biotype 1 (strain ATCC 23456 / CCUG 17765 / NCTC 10094 / 16M)).